The sequence spans 50 residues: uncharacterized protein (50 aa).

This is an uncharacterized protein from Thermoproteus tenax virus 1 (strain KRA1) (TTV1).